A 174-amino-acid chain; its full sequence is Variant surface antigen F (174 aa).

The first 29 residues, 1-29 (MKKSIFSKKLLFSFGSLVALAAIPLITIS), serve as a signal peptide directing secretion. The N-palmitoyl cysteine moiety is linked to residue Cys30. A lipid anchor (S-diacylglycerol cysteine) is attached at Cys30. A disordered region spans residues 32–174 (QTNTDQSQQP…PEQGNSQVSK (143 aa)). Residues 43-53 (SGSGSGSGTSN) show a composition bias toward gly residues. A run of 9 repeats spans residues 55-67 (SGST…GNNQ), 68-80 (GGST…GNNQ), 81-93 (GGST…GNNQ), 94-106 (GGST…GNNQ), 107-119 (GGST…GNNQ), 120-132 (GGST…GNNQ), 133-145 (GGST…GNNQ), 146-158 (GGST…GNNQ), and 159-171 (GGST…GNSQ). Residues 55–171 (SGSTPTPEQG…TPTPEQGNSQ (117 aa)) are 9 X 13 AA tandem repeats. Over residues 62 to 174 (EQGNNQGGST…PEQGNSQVSK (113 aa)) the composition is skewed to polar residues.

The protein resides in the cell membrane. Responsible for the antigenic diversity for host adaptation. Expression in E.coli of a construct containing vlpD, vlpE, and vlpF yields antigenically distinguishable products corresponding to each gene. This is Variant surface antigen F (vlpF) from Mesomycoplasma hyorhinis (Mycoplasma hyorhinis).